We begin with the raw amino-acid sequence, 158 residues long: Probable host range protein 2-1 (158 aa).

The protein belongs to the poxviridae C7 protein family.

In terms of biological role, plays a role for multiplication of the virus in different cell types. This chain is Probable host range protein 2-1, found in Rabbit fibroma virus (strain Kasza) (RFV).